Consider the following 352-residue polypeptide: Rhodopsin (352 aa).

Residues 1-36 (MNGTEGPFFYIPMVNTTGIVRSPYEYPQYYLVNPAA) lie on the Extracellular side of the membrane. 2 N-linked (GlcNAc...) asparagine glycosylation sites follow: asparagine 2 and asparagine 15. Residues 37–61 (YACLGAYMFFLILVGFPVNFLTLYV) form a helical membrane-spanning segment. Over 62 to 73 (TLEHKKLRTPLN) the chain is Cytoplasmic. The chain crosses the membrane as a helical span at residues 74 to 96 (YILLNLAVADLFMVFGGFTTTMY). Residues 97–110 (TSMHGYFVLGRLGC) are Extracellular-facing. Cysteine 110 and cysteine 187 are disulfide-bonded. Residues 111–133 (NIEGFFATLGGEIALWSLVVLAI) form a helical membrane-spanning segment. Residues 134–136 (ERW) carry the 'Ionic lock' involved in activated form stabilization motif. At 134–152 (ERWVVVCKPISNFRFGENH) the chain is on the cytoplasmic side. Residues 153–173 (AIMGVAFTWFMASACAVPPLV) form a helical membrane-spanning segment. Over 174 to 202 (GWSRYIPEGMQCSCGVDYYTRAEGFNNES) the chain is Extracellular. N-linked (GlcNAc...) asparagine glycosylation occurs at asparagine 200. The chain crosses the membrane as a helical span at residues 203 to 224 (FVIYMFIVHFCIPLAVVGFCYG). Over 225–252 (RLLCAVKEAAAAQQESETTQRAEREVSR) the chain is Cytoplasmic. Residues 253–274 (MVVIMVIGFLVCWLPYASVAWY) traverse the membrane as a helical segment. Topologically, residues 275-286 (IFTHQGSEFGPP) are extracellular. The chain crosses the membrane as a helical span at residues 287–308 (FMTVPAFFAKSSSIYNPMIYIC). Lysine 296 is modified (N6-(retinylidene)lysine). Over 309-352 (MNKQFRHCMITTLCCGKNPFEEEEGASTTKTEASSVSSSSVSPA) the chain is Cytoplasmic. Residues cysteine 322 and cysteine 323 are each lipidated (S-palmitoyl cysteine). Residues 331-352 (EEGASTTKTEASSVSSSSVSPA) form a disordered region. The span at 342–352 (SSVSSSSVSPA) shows a compositional bias: low complexity.

The protein belongs to the G-protein coupled receptor 1 family. Opsin subfamily. Post-translationally, phosphorylated on some or all of the serine and threonine residues present in the C-terminal region. Contains one covalently linked retinal chromophore.

Its subcellular location is the membrane. The protein localises to the cell projection. The protein resides in the cilium. It is found in the photoreceptor outer segment. Photoreceptor required for image-forming vision at low light intensity. While most salt water fish species use retinal as chromophore, most freshwater fish use 3-dehydroretinal, or a mixture of retinal and 3-dehydroretinal. Light-induced isomerization of 11-cis to all-trans retinal triggers a conformational change that activates signaling via G-proteins. Subsequent receptor phosphorylation mediates displacement of the bound G-protein alpha subunit by arrestin and terminates signaling. This is Rhodopsin (rho) from Zosterisessor ophiocephalus (Grass goby).